The primary structure comprises 363 residues: 3-isopropylmalate dehydrogenase (363 aa).

78 to 91 (GPKWENLPPESQPE) is an NAD(+) binding site. Substrate-binding residues include Arg-99, Arg-109, Arg-138, and Asp-227. Residues Asp-227, Asp-251, and Asp-255 each coordinate Mg(2+). An NAD(+)-binding site is contributed by 285–297 (GSAPDIAGKNIAN).

This sequence belongs to the isocitrate and isopropylmalate dehydrogenases family. LeuB type 1 subfamily. In terms of assembly, homodimer. Mg(2+) is required as a cofactor. Requires Mn(2+) as cofactor.

It localises to the cytoplasm. It catalyses the reaction (2R,3S)-3-isopropylmalate + NAD(+) = 4-methyl-2-oxopentanoate + CO2 + NADH. The protein operates within amino-acid biosynthesis; L-leucine biosynthesis; L-leucine from 3-methyl-2-oxobutanoate: step 3/4. Its function is as follows. Catalyzes the oxidation of 3-carboxy-2-hydroxy-4-methylpentanoate (3-isopropylmalate) to 3-carboxy-4-methyl-2-oxopentanoate. The product decarboxylates to 4-methyl-2 oxopentanoate. This chain is 3-isopropylmalate dehydrogenase, found in Salmonella choleraesuis (strain SC-B67).